We begin with the raw amino-acid sequence, 77 residues long: Secapin-2 (77 aa).

The N-terminal stretch at 1–32 (MKNYSKNATYLITVLLFSFVTMLLIIPSKCEA) is a signal peptide. The propeptide occupies 33-52 (VSNDMQPLEARTADLVQQPR). Cys-61 and Cys-72 are joined by a disulfide. Pro-77 carries the post-translational modification Proline amide.

Belongs to the secapin family. As to expression, expressed by the venom gland.

It is found in the secreted. Serine protease inhibitor which exhibits antifibrinolytic, antielastolytic and antimicrobial activities. Displays antimicrobial activity against bacteria and fungi. Likely functions in the innate immune response to microbial infection and possibly in the venom, as an antifibrinolytic agent. Induces hyperalgesia and edema mediated by leukotrienes when injected into mice. Does not induce hemolytic activity, mast cell degranulation, or chemotactic activity for polymorphonucleated leukocytes (PMNL). This is Secapin-2 from Apis mellifera (Honeybee).